The primary structure comprises 275 residues: Glutamate racemase (275 aa).

Residues 10 to 11 (DS) and 42 to 43 (YG) contribute to the substrate site. The active-site Proton donor/acceptor is the cysteine 74. 75–76 (NT) is a binding site for substrate. Cysteine 189 functions as the Proton donor/acceptor in the catalytic mechanism. Residue 190-191 (TH) participates in substrate binding.

This sequence belongs to the aspartate/glutamate racemases family.

The catalysed reaction is L-glutamate = D-glutamate. It participates in cell wall biogenesis; peptidoglycan biosynthesis. Functionally, provides the (R)-glutamate required for cell wall biosynthesis. This chain is Glutamate racemase, found in Bartonella tribocorum (strain CIP 105476 / IBS 506).